We begin with the raw amino-acid sequence, 142 residues long: Small ribosomal subunit protein bS6 (142 aa).

The span at 113 to 136 (IKKEPREPREPRAPREPKAEKIEE) shows a compositional bias: basic and acidic residues. The segment at 113 to 142 (IKKEPREPREPRAPREPKAEKIEEQTFSEE) is disordered.

It belongs to the bacterial ribosomal protein bS6 family.

Binds together with bS18 to 16S ribosomal RNA. The chain is Small ribosomal subunit protein bS6 from Campylobacter curvus (strain 525.92).